Here is a 401-residue protein sequence, read N- to C-terminus: Argininosuccinate synthase (401 aa).

Residues 10–18 and Ala38 each bind ATP; that span reads AYSGGVDTS. L-citrulline is bound at residue Tyr89. Gly119 serves as a coordination point for ATP. L-aspartate-binding residues include Thr121, Asn125, and Asp126. Residue Asn125 participates in L-citrulline binding. Arg129, Ser177, Ser186, Glu262, and Tyr274 together coordinate L-citrulline.

Belongs to the argininosuccinate synthase family. Type 1 subfamily. As to quaternary structure, homotetramer.

It is found in the cytoplasm. It carries out the reaction L-citrulline + L-aspartate + ATP = 2-(N(omega)-L-arginino)succinate + AMP + diphosphate + H(+). The protein operates within amino-acid biosynthesis; L-arginine biosynthesis; L-arginine from L-ornithine and carbamoyl phosphate: step 2/3. The polypeptide is Argininosuccinate synthase (Synechococcus sp. (strain WH7803)).